The chain runs to 161 residues: MTKKALFTGSFDPVTNGHLDIIERASYLFDHVYIGLFYNLEKQGYFSIECRKKMLEEAIRQFKNVSVLVAQDRLAVDLAREVGAKYFVRGLRNSQDFDYEANLEFFNKQLADDIETVYLSTSPSLSPISSSRIRELIYFKASVKPFVPKSVVREVEKMSEE.

Ser-10 serves as a coordination point for substrate. Residues 10–11 and His-18 contribute to the ATP site; that span reads SF. Substrate-binding residues include Lys-42, Ala-75, and Arg-89. ATP-binding positions include 90–92, Glu-100, and 125–131; these read GLR and LSPISSS.

It belongs to the bacterial CoaD family. In terms of assembly, homohexamer. Requires Mg(2+) as cofactor.

The protein resides in the cytoplasm. It carries out the reaction (R)-4'-phosphopantetheine + ATP + H(+) = 3'-dephospho-CoA + diphosphate. It participates in cofactor biosynthesis; coenzyme A biosynthesis; CoA from (R)-pantothenate: step 4/5. Reversibly transfers an adenylyl group from ATP to 4'-phosphopantetheine, yielding dephospho-CoA (dPCoA) and pyrophosphate. This chain is Phosphopantetheine adenylyltransferase, found in Streptococcus agalactiae serotype III (strain NEM316).